The sequence spans 176 residues: Large ribosomal subunit protein uL16 (176 aa).

This sequence belongs to the universal ribosomal protein uL16 family.

The chain is Large ribosomal subunit protein uL16 from Thermoplasma acidophilum (strain ATCC 25905 / DSM 1728 / JCM 9062 / NBRC 15155 / AMRC-C165).